The following is a 328-amino-acid chain: MKFGIEFVPSDPALKIAYYAKLSEQQGFDHVWITDHYNNRDVYSTLTVLALNTNSIKIGPGVTNSYTRNPAITASSIASIAEISGGRAVLGLGPGDKATFDAMGIAWKKPLATTKEAIQAIRDFISGKKVSMDGEMIKFAGAKLAFKAGNIPIYMGAQGPKMLELAGEIADGVLINASHPKDFEVAVEQIKKGAEKAGRDPSEVDVTAYACFSIDKDPVKAVNAAKVVVAFIVAGSPDLVLERHGIPVEAKSQIGAAIAKGDFGALMGGLVTPQMIEAFSICGTPDDCMKRIKDLEAIGVTQIVAGSPIGPAKEKAIKLIGKEIIAKM.

This sequence belongs to the mer family.

The protein resides in the cytoplasm. It catalyses the reaction 5-methyl-5,6,7,8-tetrahydromethanopterin + oxidized coenzyme F420-(gamma-L-Glu)(n) + H(+) = 5,10-methylenetetrahydromethanopterin + reduced coenzyme F420-(gamma-L-Glu)(n). The protein operates within one-carbon metabolism; methanogenesis from CO(2); methyl-coenzyme M from 5,10-methylene-5,6,7,8-tetrahydromethanopterin: step 1/2. Its function is as follows. Catalyzes the reversible reduction of methylene-H(4)MPT to methyl-H(4)MPT. The protein is 5,10-methylenetetrahydromethanopterin reductase of Methanosarcina barkeri (strain Fusaro / DSM 804).